The primary structure comprises 119 residues: Large ribosomal subunit protein uL18 (119 aa).

This sequence belongs to the universal ribosomal protein uL18 family. Part of the 50S ribosomal subunit; part of the 5S rRNA/L5/L18/L25 subcomplex. Contacts the 5S and 23S rRNAs.

In terms of biological role, this is one of the proteins that bind and probably mediate the attachment of the 5S RNA into the large ribosomal subunit, where it forms part of the central protuberance. This is Large ribosomal subunit protein uL18 from Borrelia duttonii (strain Ly).